The primary structure comprises 297 residues: SATFSHGSFCYIPPDTHCPLELSTYFRINNKESGQFERTLIIADKNSYVSYLEGCTAPQFDNNQLHAAVVELVALENATIKYSTVQNWYAGNEKGQGGIYNFVTKRGICIGNNSKILWTQVETGSAITWKYPSCILAGHNSIGEFSSIALTNNYQQADTGSKMIHIGKNTKSRILSKGISAGYSANSYRGLVKIGPKAHYSRNYSQCDSLLLSNTSKANTFPYIQAQNPYTKIEHEASTSKIGEEQIFYFLQRGINLENAISLMISGFCKEVLNELPMEFAVEADRLLNLKLEGTVG.

It belongs to the iron-sulfur cluster assembly SufBD family.

It is found in the plastid. It localises to the chloroplast. This is Iron-sulfur cluster assembly SufBD family protein ycf24 (ycf24) from Antithamnion sp. (Red alga).